A 155-amino-acid polypeptide reads, in one-letter code: Small ribosomal subunit protein uS7c (155 aa).

Belongs to the universal ribosomal protein uS7 family. Part of the 30S ribosomal subunit.

The protein resides in the plastid. The protein localises to the chloroplast. One of the primary rRNA binding proteins, it binds directly to 16S rRNA where it nucleates assembly of the head domain of the 30S subunit. The chain is Small ribosomal subunit protein uS7c (rps7) from Silene latifolia (White campion).